The following is a 450-amino-acid chain: UPF0236 protein in vanSb 3'region (450 aa).

It belongs to the UPF0236 family.

This is UPF0236 protein in vanSb 3'region from Streptococcus gallolyticus (Streptococcus bovis biotype I).